Here is a 215-residue protein sequence, read N- to C-terminus: N-(5'-phosphoribosyl)anthranilate isomerase (215 aa).

It belongs to the TrpF family.

The catalysed reaction is N-(5-phospho-beta-D-ribosyl)anthranilate = 1-(2-carboxyphenylamino)-1-deoxy-D-ribulose 5-phosphate. The protein operates within amino-acid biosynthesis; L-tryptophan biosynthesis; L-tryptophan from chorismate: step 3/5. In Rhizobium meliloti (strain 1021) (Ensifer meliloti), this protein is N-(5'-phosphoribosyl)anthranilate isomerase.